Consider the following 196-residue polypeptide: Probable GTP-binding protein EngB (196 aa).

The EngB-type G domain occupies 24–196 (ELSEVALSGR…IWNLIEPYIS (173 aa)). Residues 32 to 39 (GRSNVGKS), 59 to 63 (GKTQT), 77 to 80 (DVPG), 144 to 147 (TKED), and 176 to 178 (YSS) contribute to the GTP site. Mg(2+) contacts are provided by Ser-39 and Thr-61.

This sequence belongs to the TRAFAC class TrmE-Era-EngA-EngB-Septin-like GTPase superfamily. EngB GTPase family. Mg(2+) is required as a cofactor.

Functionally, necessary for normal cell division and for the maintenance of normal septation. This is Probable GTP-binding protein EngB from Staphylococcus aureus (strain MRSA252).